Here is a 381-residue protein sequence, read N- to C-terminus: Probable glucuronosyltransferase Os04g0103100 (381 aa).

At 1-69 the chain is on the cytoplasmic side; sequence MASIRRPHSP…HTSFRRPLPR (69 aa). Positions 21-50 are disordered; that stretch reads HLGPFASSSPPSSPLRHSSSSSSPRSAAHH. Low complexity predominate over residues 26 to 46; the sequence is ASSSPPSSPLRHSSSSSSPRS. A helical; Signal-anchor for type II membrane protein transmembrane segment spans residues 70-90; that stretch reads FAAFFLLGSFLGLLHFLSHLP. Residues 91 to 381 lie on the Lumenal side of the membrane; sequence RPLGPIPNPN…TDLDVIIPLK (291 aa). Residues 96 to 122 form a disordered region; the sequence is IPNPNSHHRHRDPFPILQHPHPPSTPH. N-linked (GlcNAc...) asparagine glycosylation is found at N194 and N296.

Belongs to the glycosyltransferase 43 family.

It is found in the golgi apparatus membrane. Functionally, involved in the synthesis of glucuronoxylan hemicellulose in secondary cell walls. In Oryza sativa subsp. japonica (Rice), this protein is Probable glucuronosyltransferase Os04g0103100.